The following is a 432-amino-acid chain: Glutamyl-tRNA reductase (432 aa).

Substrate-binding positions include 49 to 52, Ser-107, 112 to 114, and Gln-118; these read TCNR and ETQ. The active-site Nucleophile is the Cys-50. An NADP(+)-binding site is contributed by 186–191; the sequence is GAGEMG.

Belongs to the glutamyl-tRNA reductase family. In terms of assembly, homodimer.

The enzyme catalyses (S)-4-amino-5-oxopentanoate + tRNA(Glu) + NADP(+) = L-glutamyl-tRNA(Glu) + NADPH + H(+). It participates in porphyrin-containing compound metabolism; protoporphyrin-IX biosynthesis; 5-aminolevulinate from L-glutamyl-tRNA(Glu): step 1/2. In terms of biological role, catalyzes the NADPH-dependent reduction of glutamyl-tRNA(Glu) to glutamate 1-semialdehyde (GSA). The protein is Glutamyl-tRNA reductase of Campylobacter jejuni subsp. jejuni serotype O:23/36 (strain 81-176).